We begin with the raw amino-acid sequence, 548 residues long: Membrane protein insertase YidC (548 aa).

Residues 6 to 26 (NLLVIALLFVSFMIWQAWEQD) traverse the membrane as a helical segment. The interval 28 to 56 (NPQPQTQQTTQTTTTAAGSAADQGVPASG) is disordered. The segment covering 29 to 42 (PQPQTQQTTQTTTT) has biased composition (low complexity). The next 4 helical transmembrane spans lie at 350–370 (FVGN…GIMY), 424–444 (FPLI…MGSI), 458–478 (LSAQ…MFFI), and 499–519 (PVIF…YYIV).

Belongs to the OXA1/ALB3/YidC family. Type 1 subfamily. Interacts with the Sec translocase complex via SecD. Specifically interacts with transmembrane segments of nascent integral membrane proteins during membrane integration.

The protein localises to the cell inner membrane. Functionally, required for the insertion and/or proper folding and/or complex formation of integral membrane proteins into the membrane. Involved in integration of membrane proteins that insert both dependently and independently of the Sec translocase complex, as well as at least some lipoproteins. Aids folding of multispanning membrane proteins. This is Membrane protein insertase YidC from Salmonella dublin (strain CT_02021853).